The following is a 372-amino-acid chain: Serine/threonine-protein kinase 17B (372 aa).

In terms of domain architecture, Protein kinase spans 33–293; sequence TLTPKELGRG…AESCLSHSWL (261 aa). Residues 39–47 and K62 contribute to the ATP site; that span reads LGRGKFAVV. D158 functions as the Proton acceptor in the catalytic mechanism. A disordered region spans residues 305–348; that stretch reads EETSGSSQIQDLTLRSSEEKTSKSSCNGSCGAREDKENIPEDGS. Residues 307 to 319 show a composition bias toward polar residues; the sequence is TSGSSQIQDLTLR.

This sequence belongs to the protein kinase superfamily. CAMK Ser/Thr protein kinase family. DAP kinase subfamily. Interacts with CHP1; the interaction induces CHP1 to translocate from the Golgi to the nucleus. In terms of processing, autophosphorylated.

It localises to the nucleus. The protein localises to the cell membrane. Its subcellular location is the endoplasmic reticulum-Golgi intermediate compartment. It catalyses the reaction L-seryl-[protein] + ATP = O-phospho-L-seryl-[protein] + ADP + H(+). The catalysed reaction is L-threonyl-[protein] + ATP = O-phospho-L-threonyl-[protein] + ADP + H(+). Acts as a positive regulator of apoptosis. Phosphorylates myosin light chains. In Mus musculus (Mouse), this protein is Serine/threonine-protein kinase 17B (Stk17b).